The sequence spans 165 residues: Phosphopantetheine adenylyltransferase (165 aa).

Position 11 (threonine 11) interacts with substrate. ATP contacts are provided by residues 11–12 and histidine 19; that span reads TF. The substrate site is built by lysine 43, threonine 79, and arginine 93. ATP-binding positions include glutamate 104 and 128-134; that span reads LEPLNST.

The protein belongs to the bacterial CoaD family. Homohexamer. It depends on Mg(2+) as a cofactor.

The protein resides in the cytoplasm. It carries out the reaction (R)-4'-phosphopantetheine + ATP + H(+) = 3'-dephospho-CoA + diphosphate. It participates in cofactor biosynthesis; coenzyme A biosynthesis; CoA from (R)-pantothenate: step 4/5. Functionally, reversibly transfers an adenylyl group from ATP to 4'-phosphopantetheine, yielding dephospho-CoA (dPCoA) and pyrophosphate. This Lactococcus lactis subsp. lactis (strain IL1403) (Streptococcus lactis) protein is Phosphopantetheine adenylyltransferase.